A 151-amino-acid polypeptide reads, in one-letter code: 3-hydroxyacyl-[acyl-carrier-protein] dehydratase FabZ (151 aa).

His-56 is an active-site residue.

This sequence belongs to the thioester dehydratase family. FabZ subfamily.

The protein localises to the cytoplasm. It carries out the reaction a (3R)-hydroxyacyl-[ACP] = a (2E)-enoyl-[ACP] + H2O. Involved in unsaturated fatty acids biosynthesis. Catalyzes the dehydration of short chain beta-hydroxyacyl-ACPs and long chain saturated and unsaturated beta-hydroxyacyl-ACPs. The chain is 3-hydroxyacyl-[acyl-carrier-protein] dehydratase FabZ from Nitrobacter hamburgensis (strain DSM 10229 / NCIMB 13809 / X14).